The chain runs to 122 residues: Small ribosomal subunit protein uS13 (122 aa).

A disordered region spans residues 97–122; sequence PVRGQRTHTNARTRKGPAKAIAGKKK.

It belongs to the universal ribosomal protein uS13 family. Part of the 30S ribosomal subunit. Forms a loose heterodimer with protein S19. Forms two bridges to the 50S subunit in the 70S ribosome.

Functionally, located at the top of the head of the 30S subunit, it contacts several helices of the 16S rRNA. In the 70S ribosome it contacts the 23S rRNA (bridge B1a) and protein L5 of the 50S subunit (bridge B1b), connecting the 2 subunits; these bridges are implicated in subunit movement. Contacts the tRNAs in the A and P-sites. This is Small ribosomal subunit protein uS13 from Bartonella tribocorum (strain CIP 105476 / IBS 506).